Consider the following 194-residue polypeptide: dTTP/UTP pyrophosphatase (194 aa).

Residue aspartate 73 is the Proton acceptor of the active site.

Belongs to the Maf family. YhdE subfamily. A divalent metal cation serves as cofactor.

It is found in the cytoplasm. It catalyses the reaction dTTP + H2O = dTMP + diphosphate + H(+). The catalysed reaction is UTP + H2O = UMP + diphosphate + H(+). Nucleoside triphosphate pyrophosphatase that hydrolyzes dTTP and UTP. May have a dual role in cell division arrest and in preventing the incorporation of modified nucleotides into cellular nucleic acids. This chain is dTTP/UTP pyrophosphatase, found in Clostridium botulinum (strain 657 / Type Ba4).